We begin with the raw amino-acid sequence, 756 residues long: Anaphase-promoting complex subunit 5 (756 aa).

TPR repeat units lie at residues 301 to 334 (RYAA…AQES), 522 to 555 (DGRY…KAQN), 581 to 614 (ISVL…SREY), and 678 to 711 (YSQQ…EQLR).

It belongs to the APC5 family. As to quaternary structure, the APC/C is composed of at least 12 subunits.

It localises to the nucleus. The protein localises to the cytoplasm. It is found in the cytoskeleton. The protein resides in the spindle. It functions in the pathway protein modification; protein ubiquitination. Functionally, component of the anaphase promoting complex/cyclosome (APC/C), a cell cycle-regulated E3 ubiquitin ligase that controls progression through mitosis and the G1 phase of the cell cycle. The APC/C complex acts by mediating ubiquitination and subsequent degradation of target proteins: it mainly mediates the formation of 'Lys-11'-linked polyubiquitin chains and, to a lower extent, the formation of 'Lys-48'- and 'Lys-63'-linked polyubiquitin chains. The APC/C complex catalyzes assembly of branched 'Lys-11'-/'Lys-48'-linked branched ubiquitin chains on target proteins. The chain is Anaphase-promoting complex subunit 5 (ANAPC5) from Gallus gallus (Chicken).